The following is a 438-amino-acid chain: Alkylcitrate synthase tstJ (438 aa).

Active-site residues include histidine 309 and aspartate 365.

The protein belongs to the citrate synthase family.

The enzyme catalyses (2E,10E)-dode-2,10-dicenoyl-CoA + oxaloacetate + H2O = (4E,11E)-2-hydroxytrideca-4,11-dien-1,2,3-tricarboxylate + CoA + H(+). Its pathway is secondary metabolite biosynthesis. Alkylcitrate synthase; part of the gene cluster that mediates the biosynthesis of the antihypercholesterolemic agents phomoidrides which are dimeric anhydrides. Within the pathway, the alkylcitrate synthase (ACS) tstJ and the alkylcitrate dehydratase (ACDH) tstI produce the decarboxylated monomeric anhydrides by coupling the C12-fatty acyl product from phiA with oxalacetic acid. The pathway begins with the highly reducing polyketide synthase tstA that catalyzes the formation of a C12-fatty acyl-ACP, starting from one acetate and 5 malonate units. The hydrolase tstM is involved in the release of the C12-fatty acyl chain from phiA. The alkylcitrate synthase (ACS) tstJ and the alkylcitrate dehydratase (ACDH) tstI then give rise to decarboxylated monomeric anhydrides by coupling the C12-fatty acyl chain with oxalacetic acid. The cyclase tstC is responsible for the dimerization of the monomeric anhydrides which leads to the production of prephomoidride that contains the characteristic bicyclo[4.3.1]deca-1,6-diene system of phomoidrides. Iterative oxidation catalyzed by the alpha-ketoglutarate-dependent dioxygenase tstK produced then phomoidride A. Finally, the methyltransferase tstE converts phomoidride A to phomoidride B via an acetalization reaction. The phosphatidylethanolamine-binding protein tstB and tstN are not essential for dimerization and their functions have still to be determined. In Talaromyces stipitatus (strain ATCC 10500 / CBS 375.48 / QM 6759 / NRRL 1006) (Penicillium stipitatum), this protein is Alkylcitrate synthase tstJ.